A 206-amino-acid chain; its full sequence is Large ribosomal subunit protein uL4 (206 aa).

Positions 51–76 (AKTRAEVSGGGIKPWRQKGTGRARQG) are disordered.

It belongs to the universal ribosomal protein uL4 family. Part of the 50S ribosomal subunit.

One of the primary rRNA binding proteins, this protein initially binds near the 5'-end of the 23S rRNA. It is important during the early stages of 50S assembly. It makes multiple contacts with different domains of the 23S rRNA in the assembled 50S subunit and ribosome. Functionally, forms part of the polypeptide exit tunnel. This Clostridium kluyveri (strain ATCC 8527 / DSM 555 / NBRC 12016 / NCIMB 10680 / K1) protein is Large ribosomal subunit protein uL4.